The primary structure comprises 533 residues: Probable protein kinase UbiB (533 aa).

The helical transmembrane segment at 24 to 44 threads the bilayer; the sequence is LILELPMLPWWLRLLGAALPW. One can recognise a Protein kinase domain in the interval 126–494; it reads RFEREPLASA…WKSSRHDWLG (369 aa). ATP contacts are provided by residues 132-140 and K154; that span reads LASASVAQV. D289 acts as the Proton acceptor in catalysis. Residues 510 to 530 traverse the membrane as a helical segment; that stretch reads LGQQLEAWPAWVMLAGGVFLI.

This sequence belongs to the ABC1 family. UbiB subfamily.

The protein localises to the cell inner membrane. It functions in the pathway cofactor biosynthesis; ubiquinone biosynthesis [regulation]. Its function is as follows. Is probably a protein kinase regulator of UbiI activity which is involved in aerobic coenzyme Q (ubiquinone) biosynthesis. The chain is Probable protein kinase UbiB from Pseudomonas paraeruginosa (strain DSM 24068 / PA7) (Pseudomonas aeruginosa (strain PA7)).